Consider the following 498-residue polypeptide: N-succinylglutamate 5-semialdehyde dehydrogenase 1 (498 aa).

231 to 236 is an NAD(+) binding site; sequence GSSNTG. Residues Glu-254 and Cys-288 contribute to the active site.

The protein belongs to the aldehyde dehydrogenase family. AstD subfamily.

The catalysed reaction is N-succinyl-L-glutamate 5-semialdehyde + NAD(+) + H2O = N-succinyl-L-glutamate + NADH + 2 H(+). It functions in the pathway amino-acid degradation; L-arginine degradation via AST pathway; L-glutamate and succinate from L-arginine: step 4/5. In terms of biological role, catalyzes the NAD-dependent reduction of succinylglutamate semialdehyde into succinylglutamate. In Shewanella denitrificans (strain OS217 / ATCC BAA-1090 / DSM 15013), this protein is N-succinylglutamate 5-semialdehyde dehydrogenase 1.